Reading from the N-terminus, the 179-residue chain is Large ribosomal subunit protein uL5 (179 aa).

This sequence belongs to the universal ribosomal protein uL5 family. Part of the 50S ribosomal subunit; part of the 5S rRNA/L5/L18/L25 subcomplex. Contacts the 5S rRNA and the P site tRNA. Forms a bridge to the 30S subunit in the 70S ribosome.

Functionally, this is one of the proteins that bind and probably mediate the attachment of the 5S RNA into the large ribosomal subunit, where it forms part of the central protuberance. In the 70S ribosome it contacts protein S13 of the 30S subunit (bridge B1b), connecting the 2 subunits; this bridge is implicated in subunit movement. Contacts the P site tRNA; the 5S rRNA and some of its associated proteins might help stabilize positioning of ribosome-bound tRNAs. The polypeptide is Large ribosomal subunit protein uL5 (Synechococcus sp. (strain CC9605)).